The chain runs to 424 residues: MDKFRVYGQSRLSGSVNISGAKNAALPILFAAILATEPVKLTNVPELKDIETTLKILRQLGVVVDRDATGAVLLDASNINHFTAPYELVKTMRASIWALAPLVARFHQGQVSLPGGCSIGARPVDLHISGLEKLGADIVLEEGYVKAQVSDRLVGTRIVIEKVSVGATLSIMMAATLAKGTTVIENAAREPEIVDTADFLNKMGAKITGAGSAHITIEGVERLTGCEHSVVPDRIETGTFLIAAAISGGCVVCQNTKADTLDAVIDKLREAGAQVDVTENSITLDMLGNRPKAVNIRTAPHPGFPTDMQAQFTLLNMVAEGTSIITETIFENRFMHIPELIRMGGKAEIEGNTAVCHGVEQLSGTEVIATDLRASISLVLAGCIATGETIVDRIYHIDRGYEHIEDKLRGLGAKIERFSGSDEA.

Residue 22–23 participates in phosphoenolpyruvate binding; it reads KN. Arg-93 is a UDP-N-acetyl-alpha-D-glucosamine binding site. Residue Cys-117 is the Proton donor of the active site. Cys-117 bears the 2-(S-cysteinyl)pyruvic acid O-phosphothioketal mark. Residues 122-126, 164-166, Asp-307, and Ile-329 each bind UDP-N-acetyl-alpha-D-glucosamine; these read RPVDL and SVG.

This sequence belongs to the EPSP synthase family. MurA subfamily.

It is found in the cytoplasm. The enzyme catalyses phosphoenolpyruvate + UDP-N-acetyl-alpha-D-glucosamine = UDP-N-acetyl-3-O-(1-carboxyvinyl)-alpha-D-glucosamine + phosphate. The protein operates within cell wall biogenesis; peptidoglycan biosynthesis. In terms of biological role, cell wall formation. Adds enolpyruvyl to UDP-N-acetylglucosamine. This Haemophilus influenzae (strain ATCC 51907 / DSM 11121 / KW20 / Rd) protein is UDP-N-acetylglucosamine 1-carboxyvinyltransferase.